The sequence spans 630 residues: Alpha-1,4-glucan:maltose-1-phosphate maltosyltransferase (630 aa).

3 residues coordinate alpha-maltose 1-phosphate: Arg234, Gln294, and Asp329. Asp365 (nucleophile) is an active-site residue. Asn366 provides a ligand contact to alpha-maltose 1-phosphate. Glu394 serves as the catalytic Proton donor. 504 to 505 contributes to the alpha-maltose 1-phosphate binding site; sequence KY.

It belongs to the glycosyl hydrolase 13 family. GlgE subfamily. As to quaternary structure, homodimer.

The enzyme catalyses alpha-maltose 1-phosphate + [(1-&gt;4)-alpha-D-glucosyl](n) = [(1-&gt;4)-alpha-D-glucosyl](n+2) + phosphate. Functionally, maltosyltransferase that uses maltose 1-phosphate (M1P) as the sugar donor to elongate linear or branched alpha-(1-&gt;4)-glucans. Is involved in a branched alpha-glucan biosynthetic pathway from trehalose, together with TreS, Mak and GlgB. The sequence is that of Alpha-1,4-glucan:maltose-1-phosphate maltosyltransferase from Picrophilus torridus (strain ATCC 700027 / DSM 9790 / JCM 10055 / NBRC 100828 / KAW 2/3).